Consider the following 256-residue polypeptide: Pimeloyl-[acyl-carrier protein] methyl ester esterase (256 aa).

Positions 15-242 (HLVLLHGWGL…AAHAPFISHP (228 aa)) constitute an AB hydrolase-1 domain. Residues Trp22, 82-83 (SL), and 143-147 (FLALQ) contribute to the substrate site. Ser82 serves as the catalytic Nucleophile. Catalysis depends on residues Asp207 and His235. His235 lines the substrate pocket.

Belongs to the AB hydrolase superfamily. Carboxylesterase BioH family. As to quaternary structure, monomer.

The protein resides in the cytoplasm. It carries out the reaction 6-carboxyhexanoyl-[ACP] methyl ester + H2O = 6-carboxyhexanoyl-[ACP] + methanol + H(+). The protein operates within cofactor biosynthesis; biotin biosynthesis. Functionally, the physiological role of BioH is to remove the methyl group introduced by BioC when the pimeloyl moiety is complete. It allows to synthesize pimeloyl-ACP via the fatty acid synthetic pathway through the hydrolysis of the ester bonds of pimeloyl-ACP esters. This chain is Pimeloyl-[acyl-carrier protein] methyl ester esterase, found in Citrobacter koseri (strain ATCC BAA-895 / CDC 4225-83 / SGSC4696).